A 238-amino-acid polypeptide reads, in one-letter code: uncharacterized protein (238 aa).

It belongs to the HyuE racemase family.

This is an uncharacterized protein from Schizosaccharomyces pombe (strain 972 / ATCC 24843) (Fission yeast).